We begin with the raw amino-acid sequence, 193 residues long: 7-methyl-GTP pyrophosphatase (193 aa).

Asp-70 functions as the Proton acceptor in the catalytic mechanism.

Belongs to the Maf family. YceF subfamily. Requires a divalent metal cation as cofactor.

The protein resides in the cytoplasm. The catalysed reaction is N(7)-methyl-GTP + H2O = N(7)-methyl-GMP + diphosphate + H(+). In terms of biological role, nucleoside triphosphate pyrophosphatase that hydrolyzes 7-methyl-GTP (m(7)GTP). May have a dual role in cell division arrest and in preventing the incorporation of modified nucleotides into cellular nucleic acids. In Photobacterium profundum (strain SS9), this protein is 7-methyl-GTP pyrophosphatase.